Consider the following 633-residue polypeptide: ATP-dependent clpX-like chaperone, mitochondrial (633 aa).

The transit peptide at 1–56 (MPSCGACTCGAAAVRLITSSLASAQRGISGGRIHMSVLGRLGTFETQILQRAPLRS) directs the protein to the mitochondrion. The interval 68 to 100 (DGISKDGSGDGNKKSASEGSSKKSGSGNSGKGG) is disordered. The segment covering 69-83 (GISKDGSGDGNKKSA) has biased composition (basic and acidic residues). Residues 84-93 (SEGSSKKSGS) are compositionally biased toward low complexity. A ClpX-type ZB domain is found at 93–146 (SGNSGKGGNQLRCPKCGDLCTHVETFVSSTRFVKCEKCHHFFVVLSEADSKKSI). Zn(2+)-binding residues include Cys105, Cys108, Cys127, and Cys130. Residue 294–301 (PTGSGKTL) participates in ATP binding. Residue Lys437 is modified to N6-acetyllysine. Residues 598–610 (KEPGYIRAPTKES) are compositionally biased toward basic and acidic residues. The disordered stretch occupies residues 598–633 (KEPGYIRAPTKESSEEEYDSGVEEEGWPRQADAANS). Acidic residues predominate over residues 611–622 (SEEEYDSGVEEE). Phosphoserine is present on Ser617.

It belongs to the ClpX chaperone family. In terms of assembly, homohexamer that forms a ring structure; this hexamerization requires ATP binding. Component of the ClpXP complex formed by the assembly of two CLPP heptameric rings with two CLPX hexameric rings, giving rise to a symmetrical structure with two central CLPP rings flanked by a CLPX ring at either end of the complex. Interacts with TFAM. Higher expression in skeletal muscle and heart and to a lesser extent in liver, brain, placenta, lung, kidney and pancreas.

The protein resides in the mitochondrion. Its subcellular location is the mitochondrion matrix. The protein localises to the mitochondrion nucleoid. It carries out the reaction ATP + H2O = ADP + phosphate + H(+). ATP-dependent chaperone that functions as an unfoldase. As part of the ClpXP protease complex, it recognizes specific protein substrates, unfolds them using energy derived from ATP hydrolysis, and then translocates them to the proteolytic subunit (CLPP) of the ClpXP complex for degradation. Thanks to its chaperone activity, it also functions in the incorporation of the pyridoxal phosphate cofactor into 5-aminolevulinate synthase, thereby activating 5-aminolevulinate (ALA) synthesis, the first step in heme biosynthesis. This chaperone is also involved in the control of mtDNA nucleoid distribution, by regulating mitochondrial transcription factor A (TFAM) activity. The protein is ATP-dependent clpX-like chaperone, mitochondrial of Homo sapiens (Human).